A 252-amino-acid polypeptide reads, in one-letter code: HTH-type transcriptional regulator XynR (252 aa).

One can recognise an HTH iclR-type domain in the interval 4-66 (IQSVERALQI…PENGKYRLGM (63 aa)). Positions 25-45 (KITDISKLMGLSKSTLHSLLK) form a DNA-binding region, H-T-H motif. Residues 81 to 250 (IRQKAKGWLT…GLALSRALGY (170 aa)) enclose the IclR-ED domain.

With respect to regulation, activity may be controlled by xylonate. Involved in regulation of xylonate catabolism. Represses the expression of both yagA and yagEF operons. Binds mainly at a single site within the spacer of the bidirectional transcription units yagA and yagEF. The protein is HTH-type transcriptional regulator XynR of Escherichia coli (strain K12).